We begin with the raw amino-acid sequence, 483 residues long: Glycogen synthase (483 aa).

Lys15 contributes to the ADP-alpha-D-glucose binding site.

The protein belongs to the glycosyltransferase 1 family. Bacterial/plant glycogen synthase subfamily.

The catalysed reaction is [(1-&gt;4)-alpha-D-glucosyl](n) + ADP-alpha-D-glucose = [(1-&gt;4)-alpha-D-glucosyl](n+1) + ADP + H(+). The protein operates within glycan biosynthesis; glycogen biosynthesis. Synthesizes alpha-1,4-glucan chains using ADP-glucose. The chain is Glycogen synthase from Exiguobacterium sibiricum (strain DSM 17290 / CCUG 55495 / CIP 109462 / JCM 13490 / 255-15).